Here is a 352-residue protein sequence, read N- to C-terminus: MSKQPSLSYKDAGVDIDAGEALVERIKGVAKRTARPEVMGGLGGFGALCEIPAGYKQPVLVSGTDGVGTKLRLALNLNKHDSIGQDLVAMCVNDLVVCGAEPLFFLDYYATGKLNVDVAATVVTGIGAGCELAGCSLVGGETAEMPGMYEGEDYDLAGFCVGVVEKAEIIDGSKVATGDALIALPSSGPHSNGYSLIRKILEVSATDIENTQLDGKPLTDLLMAPTRIYVKPLLQLIKQTGAVKAMAHITGGGLLDNIPRVLPKNAQAVVDVASWQRPAVFDFLQEKGNVDEHEMHRVLNCGVGMVICVAQDQVEAALNVLRAEGEQPWVIGRIEQAAEGAAQVELQNLKAH.

This sequence belongs to the AIR synthase family.

The protein localises to the cytoplasm. The catalysed reaction is 2-formamido-N(1)-(5-O-phospho-beta-D-ribosyl)acetamidine + ATP = 5-amino-1-(5-phospho-beta-D-ribosyl)imidazole + ADP + phosphate + H(+). It functions in the pathway purine metabolism; IMP biosynthesis via de novo pathway; 5-amino-1-(5-phospho-D-ribosyl)imidazole from N(2)-formyl-N(1)-(5-phospho-D-ribosyl)glycinamide: step 2/2. This is Phosphoribosylformylglycinamidine cyclo-ligase from Pseudomonas putida (strain W619).